A 201-amino-acid polypeptide reads, in one-letter code: 3-isopropylmalate dehydratase small subunit (201 aa).

Belongs to the LeuD family. LeuD type 1 subfamily. In terms of assembly, heterodimer of LeuC and LeuD.

The enzyme catalyses (2R,3S)-3-isopropylmalate = (2S)-2-isopropylmalate. The protein operates within amino-acid biosynthesis; L-leucine biosynthesis; L-leucine from 3-methyl-2-oxobutanoate: step 2/4. In terms of biological role, catalyzes the isomerization between 2-isopropylmalate and 3-isopropylmalate, via the formation of 2-isopropylmaleate. This is 3-isopropylmalate dehydratase small subunit from Salmonella arizonae (strain ATCC BAA-731 / CDC346-86 / RSK2980).